Consider the following 51-residue polypeptide: Zinc metalloproteinase-disintegrin-like crovidisin (51 aa).

Residues 1 to 12 enclose the Peptidase M12B domain; that stretch reads AMVTKNNGDLDK. The Disintegrin domain maps to 13–18; sequence SGTECR. Asn-29 carries an N-linked (GlcNAc...) asparagine glycan.

The protein belongs to the venom metalloproteinase (M12B) family. P-III subfamily. P-IIIa sub-subfamily. Monomer. It depends on Zn(2+) as a cofactor. Expressed by the venom gland.

The protein localises to the secreted. Its function is as follows. Snake venom zinc metalloproteinase-disintegrin-like that blocks the interaction between platelets and collagen fibers through its binding to collagen fibers, resulting in the blockade of collagen-mediated platelet functions such as adhesion, release reaction, thromboxane formation, and aggregation. Binds selectively to collagen type I with high affinity. Also exerts proteolytic activity to matrix. The sequence is that of Zinc metalloproteinase-disintegrin-like crovidisin from Crotalus viridis viridis (Prairie rattlesnake).